The sequence spans 265 residues: Type II pantothenate kinase (265 aa).

Residue 6-13 (DAGGTLIK) coordinates ATP. Glu-70 acts as the Proton acceptor in catalysis. ATP contacts are provided by residues Thr-99, 121–125 (GGMIQ), Tyr-137, and Ser-225.

It belongs to the type II pantothenate kinase family. In terms of assembly, homodimer.

It localises to the cytoplasm. It carries out the reaction (R)-pantothenate + ATP = (R)-4'-phosphopantothenate + ADP + H(+). The protein operates within cofactor biosynthesis; coenzyme A biosynthesis; CoA from (R)-pantothenate: step 1/5. In terms of biological role, catalyzes the phosphorylation of pantothenate (Pan), the first step in CoA biosynthesis. This is Type II pantothenate kinase from Staphylococcus epidermidis (strain ATCC 35984 / DSM 28319 / BCRC 17069 / CCUG 31568 / BM 3577 / RP62A).